Here is a 343-residue protein sequence, read N- to C-terminus: uncharacterized protein (343 aa).

The next 11 helical transmembrane spans lie at 13-33, 44-64, 71-91, 121-141, 148-168, 177-197, 203-223, 244-264, 269-289, 296-316, and 320-340; these read VILY…SMCG, LWGY…ATLD, MHPV…LFFI, ILLL…LTGL, NASL…YLIF, FLGI…GDFS, VAVT…LDTV, VGGF…ELPL, YALG…YIAI, MVGA…FIIL, and FSIM…ILYW. EamA domains follow at residues 55 to 192 and 216 to 340; these read IFFG…YLLT and FFWS…ILYW.

The protein belongs to the EamA transporter family.

It localises to the cell membrane. This is an uncharacterized protein from Methanothermobacter thermautotrophicus (strain ATCC 29096 / DSM 1053 / JCM 10044 / NBRC 100330 / Delta H) (Methanobacterium thermoautotrophicum).